A 424-amino-acid chain; its full sequence is Serine hydroxymethyltransferase (424 aa).

Residues Leu113 and 117-119 contribute to the (6S)-5,6,7,8-tetrahydrofolate site; that span reads GHL. N6-(pyridoxal phosphate)lysine is present on Lys222. (6S)-5,6,7,8-tetrahydrofolate is bound at residue 361-363; sequence SPF.

It belongs to the SHMT family. Homodimer. The cofactor is pyridoxal 5'-phosphate.

The protein resides in the cytoplasm. The enzyme catalyses (6R)-5,10-methylene-5,6,7,8-tetrahydrofolate + glycine + H2O = (6S)-5,6,7,8-tetrahydrofolate + L-serine. It functions in the pathway one-carbon metabolism; tetrahydrofolate interconversion. Its pathway is amino-acid biosynthesis; glycine biosynthesis; glycine from L-serine: step 1/1. Catalyzes the reversible interconversion of serine and glycine with tetrahydrofolate (THF) serving as the one-carbon carrier. This reaction serves as the major source of one-carbon groups required for the biosynthesis of purines, thymidylate, methionine, and other important biomolecules. Also exhibits THF-independent aldolase activity toward beta-hydroxyamino acids, producing glycine and aldehydes, via a retro-aldol mechanism. This is Serine hydroxymethyltransferase from Flavobacterium psychrophilum (strain ATCC 49511 / DSM 21280 / CIP 103535 / JIP02/86).